The chain runs to 288 residues: UPF0761 membrane protein HS_0693 (288 aa).

6 helical membrane-spanning segments follow: residues 36 to 56 (TLAL…FPVF), 92 to 112 (QMSA…IHSI), 127 to 147 (PAIF…IVIA), 176 to 196 (LLSL…YMVV), 200 to 220 (KVSI…FTLG), and 240 to 260 (AMAT…AVLL).

This sequence belongs to the UPF0761 family.

The protein resides in the cell inner membrane. The chain is UPF0761 membrane protein HS_0693 from Histophilus somni (strain 129Pt) (Haemophilus somnus).